A 744-amino-acid chain; its full sequence is MPATRITLDSTFIDQVKHEIKPHWGELGWVTYKRTYARWLPEKNRTENWDETVKRVIEGNINLDPRLQDLPSQDVIDKLTNEAQQLFRLVYSLSATPSGRNLWISGTDYQKRNGDSLNNCWFIAIRPQAYGDSHIVPTYIDKRKEAVSMPFSFLFDQLMKGGGVGFSVVDDNINQIPQVDHQVDLSVVIDKNSKSYDASLKVGAIDKAEWEKNNSGLDNVIYYRIPDTREGWVLANARLIDLHFNDTNPDQKTKLVLDISDIRPYGAKIHGFGGTASGPMPLVEMFFDINNVINERVGQKLTAVDATDICNLIGKTVVAGNVRRSAELALGSSDNQDFIKMKQDKEKLYHHRWASNNSVAINSKFNNYGPIADGIMHNGEPGIVNLDLSRNYGRIADGYQAGIDDDVEGTNPCGEISLANGEPCNLFEVFPYIAEQQGWDLKEAFSLAARYTKRVTFSHYDWEVSRNIIQKNRRIGVSMSGIQDWLLNDLGHRVVTGFKDATDKETGAPIKKPIYDPQGIKMVDGLYHAVIAADKAYSEELGVNPSIKHTTVKPSGTVAKLAGVSEGMHFHYAGYLIQRIRFQASDPLLPALRKCGYHTEPDIYTKNTICVEIPLRAAHADSKNFASAGTVSIAEQFATQAFLQTYWSDNAVSCTVTFQANESNQIAPLLHQYRHTIKSTSLLPYYGGSLKQAPKEPINKKAYEDRVAMITGDVKEVFENQNKDQKGLELVDQSDCTSGACPIK.

A disulfide bridge links Cys120 with Cys424. The segment at 148 to 159 is effector region-1; that stretch reads SMPFSFLFDQLM. Positions 169-318 are effector region-2; it reads VDDNINQIPQ…ICNLIGKTVV (150 aa). Active-site residues include Cys413 and Glu415. The interval 570-631 is adenosylcobalamin-binding-1; sequence FHYAGYLIQR…SKNFASAGTV (62 aa). The interval 690–729 is adenosylcobalamin-binding-2; the sequence is LKQAPKEPINKKAYEDRVAMITGDVKEVFENQNKDQKGLE.

This sequence belongs to the class II ribonucleoside-triphosphate reductase family. Monomer. The cofactor is adenosylcob(III)alamin.

It catalyses the reaction a 2'-deoxyribonucleoside 5'-triphosphate + [thioredoxin]-disulfide + H2O = a ribonucleoside 5'-triphosphate + [thioredoxin]-dithiol. Its activity is regulated as follows. Allosterically regulated by ATP and dNTP. This is Adenosylcobalamin-dependent ribonucleoside-triphosphate reductase (rtpR) from Lactobacillus helveticus (strain DPC 4571).